The sequence spans 505 residues: Dolichyl pyrophosphate Glc1Man9GlcNAc2 alpha-1,3-glucosyltransferase (505 aa).

Residues 1–3 lie on the Lumenal side of the membrane; the sequence is MAE. Residues 4 to 24 form a helical membrane-spanning segment; that stretch reads IYPSLVQCAIVATAFKVLLFP. Residues 25–101 are Cytoplasmic-facing; that stretch reads AYKSTDFEVH…DSWQTVYFQR (77 aa). A helical transmembrane segment spans residues 102 to 122; that stretch reads WTVIVTELVLLYALQMFVDST. Topologically, residues 123 to 128 are lumenal; that stretch reads PGVSKR. The chain crosses the membrane as a helical span at residues 129-149; that stretch reads AAHAAAVSILLSPGLLIIDHI. Topologically, residues 150–152 are cytoplasmic; sequence HFQ. A helical membrane pass occupies residues 153–169; sequence YNGVMYGILIASLVLAK. Over 170–173 the chain is Lumenal; the sequence is KKSS. The chain crosses the membrane as a helical span at residues 174 to 194; it reads LLASGLVFAALLCMKHIYLYL. Topologically, residues 195-224 are cytoplasmic; it reads APAYFVYLLRVYCLPPKLSPRSIFRIQFFN. A helical transmembrane segment spans residues 225 to 245; it reads CVKLGGGIAAIFAAAFGPFAL. Residues 246-319 are Lumenal-facing; sequence KNQIPQIFSR…TSFAVLPDIT (74 aa). A helical membrane pass occupies residues 320–340; the sequence is PRMCFVLTLLFQAIPLIKLFM. Residues 341–359 lie on the Cytoplasmic side of the membrane; the sequence is RPTWEGFIGGVTLCGYASF. Residues 360–380 form a helical membrane-spanning segment; that stretch reads LFGWHVHEKAILLVIIPFSLI. Residues 381-386 are Lumenal-facing; that stretch reads ALKDRR. A helical transmembrane segment spans residues 387 to 407; the sequence is YLGAFRPLAVAGHVSLFPLIF. The Cytoplasmic segment spans residues 408–409; the sequence is TP. A helical transmembrane segment spans residues 410-430; that stretch reads AEFPIKTVYTIFWLVLFLMAF. The Lumenal portion of the chain corresponds to 431 to 450; that stretch reads DRLAPAPTRQRLFLFDRFST. Residues 451–471 traverse the membrane as a helical segment; sequence AYITVSIPLIFYCSLMHGIIF. The Cytoplasmic portion of the chain corresponds to 472–480; it reads GKSYEFLPL. Residues 481–501 traverse the membrane as a helical segment; sequence MFTSSYSAIGVVGSWLGFMVV. The Lumenal portion of the chain corresponds to 502–505; sequence YFTE.

It belongs to the ALG6/ALG8 glucosyltransferase family.

It localises to the endoplasmic reticulum membrane. The enzyme catalyses an alpha-D-Glc-(1-&gt;3)-alpha-D-Man-(1-&gt;2)-alpha-D-Man-(1-&gt;2)-alpha-D-Man-(1-&gt;3)-[alpha-D-Man-(1-&gt;2)-alpha-D-Man-(1-&gt;3)-[alpha-D-Man-(1-&gt;2)-alpha-D-Man-(1-&gt;6)]-alpha-D-Man-(1-&gt;6)]-beta-D-Man-(1-&gt;4)-beta-D-GlcNAc-(1-&gt;4)-alpha-D-GlcNAc-diphospho-di-trans,poly-cis-dolichol + a di-trans,poly-cis-dolichyl beta-D-glucosyl phosphate = an alpha-D-Glc-(1-&gt;3)-alpha-D-Glc-(1-&gt;3)-alpha-D-Man-(1-&gt;2)-alpha-D-Man-(1-&gt;2)-alpha-D-Man-(1-&gt;3)-[alpha-D-Man-(1-&gt;2)-alpha-D-Man-(1-&gt;3)-[alpha-D-Man-(1-&gt;2)-alpha-D-Man-(1-&gt;6)]-alpha-D-Man-(1-&gt;6)]-beta-D-Man-(1-&gt;4)-beta-D-GlcNAc-(1-&gt;4)-alpha-D-GlcNAc-diphospho-di-trans,poly-cis-dolichol + a di-trans,poly-cis-dolichyl phosphate + H(+). Its pathway is protein modification; protein glycosylation. In terms of biological role, dolichyl pyrophosphate Glc1Man9GlcNAc2 alpha-1,3-glucosyltransferase that operates in the biosynthetic pathway of dolichol-linked oligosaccharides, the glycan precursors employed in protein asparagine (N)-glycosylation. The assembly of dolichol-linked oligosaccharides begins on the cytosolic side of the endoplasmic reticulum membrane and finishes in its lumen. The sequential addition of sugars to dolichol pyrophosphate produces dolichol-linked oligosaccharides containing fourteen sugars, including two GlcNAcs, nine mannoses and three glucoses. Once assembled, the oligosaccharide is transferred from the lipid to nascent proteins by oligosaccharyltransferases. In the lumen of the endoplasmic reticulum, adds the second glucose residue from dolichyl phosphate glucose (Dol-P-Glc) onto the lipid-linked oligosaccharide intermediate Glc(1)Man(9)GlcNAc(2)-PP-Dol to produce Glc(2)Man(9)GlcNAc(2)-PP-Dol. The protein is Dolichyl pyrophosphate Glc1Man9GlcNAc2 alpha-1,3-glucosyltransferase (alg-8) of Neurospora crassa (strain ATCC 24698 / 74-OR23-1A / CBS 708.71 / DSM 1257 / FGSC 987).